The primary structure comprises 500 residues: Catalase (500 aa).

Residues His59 and Asn131 contribute to the active site. A heme-binding site is contributed by Tyr339.

The protein belongs to the catalase family. It depends on heme as a cofactor.

The catalysed reaction is 2 H2O2 = O2 + 2 H2O. In terms of biological role, decomposes hydrogen peroxide into water and oxygen; serves to protect cells from the toxic effects of hydrogen peroxide. This Neisseria gonorrhoeae protein is Catalase (katA).